The primary structure comprises 233 residues: Orotidine 5'-phosphate decarboxylase (233 aa).

Substrate-binding positions include aspartate 9, lysine 31, 58–67, threonine 120, arginine 182, glutamine 191, glycine 211, and arginine 212; that span reads DLKLHDIPNT. The Proton donor role is filled by lysine 60.

The protein belongs to the OMP decarboxylase family. Type 1 subfamily. As to quaternary structure, homodimer.

It carries out the reaction orotidine 5'-phosphate + H(+) = UMP + CO2. It participates in pyrimidine metabolism; UMP biosynthesis via de novo pathway; UMP from orotate: step 2/2. Catalyzes the decarboxylation of orotidine 5'-monophosphate (OMP) to uridine 5'-monophosphate (UMP). The chain is Orotidine 5'-phosphate decarboxylase from Listeria monocytogenes serotype 4a (strain HCC23).